The chain runs to 552 residues: Membrane protein insertase YidC (552 aa).

The helical transmembrane segment at Ile3 to Trp23 threads the bilayer. A disordered region spans residues Pro35 to Asp59. Over residues Thr42 to Asp59 the composition is skewed to low complexity. 3 helical membrane passes run Trp364 to Ala384, Phe430 to Leu450, and Met504 to Leu524.

This sequence belongs to the OXA1/ALB3/YidC family. Type 1 subfamily. Interacts with the Sec translocase complex via SecD. Specifically interacts with transmembrane segments of nascent integral membrane proteins during membrane integration.

Its subcellular location is the cell inner membrane. Its function is as follows. Required for the insertion and/or proper folding and/or complex formation of integral membrane proteins into the membrane. Involved in integration of membrane proteins that insert both dependently and independently of the Sec translocase complex, as well as at least some lipoproteins. Aids folding of multispanning membrane proteins. The polypeptide is Membrane protein insertase YidC (Paraburkholderia phytofirmans (strain DSM 17436 / LMG 22146 / PsJN) (Burkholderia phytofirmans)).